The primary structure comprises 113 residues: Ribonuclease P protein component (113 aa).

Belongs to the RnpA family. As to quaternary structure, consists of a catalytic RNA component (M1 or rnpB) and a protein subunit.

It catalyses the reaction Endonucleolytic cleavage of RNA, removing 5'-extranucleotides from tRNA precursor.. RNaseP catalyzes the removal of the 5'-leader sequence from pre-tRNA to produce the mature 5'-terminus. It can also cleave other RNA substrates such as 4.5S RNA. The protein component plays an auxiliary but essential role in vivo by binding to the 5'-leader sequence and broadening the substrate specificity of the ribozyme. This Vesicomyosocius okutanii subsp. Calyptogena okutanii (strain HA) protein is Ribonuclease P protein component.